The primary structure comprises 219 residues: Cytidylate kinase (219 aa).

Position 21–29 (21–29 (GPAASGKGT)) interacts with ATP.

Belongs to the cytidylate kinase family. Type 1 subfamily.

It is found in the cytoplasm. It catalyses the reaction CMP + ATP = CDP + ADP. The catalysed reaction is dCMP + ATP = dCDP + ADP. The polypeptide is Cytidylate kinase (Rickettsia prowazekii (strain Madrid E)).